The primary structure comprises 331 residues: Reticulocalbin-1 (331 aa).

The N-terminal stretch at 1–29 (MARGGRGRRLGLALGLLLALVLAPRVLRA) is a signal peptide. An N-linked (GlcNAc...) asparagine glycan is attached at Asn-53. Ser-55 is subject to Phosphoserine. Phosphothreonine is present on Thr-76. 6 EF-hand domains span residues 79-114 (ESKE…VQKR), 115-150 (YIFD…YYLG), 166-201 (KMLP…EEFE), 203-238 (MKEI…HEEN), 244-279 (WVLS…QDYD), and 280-315 (HAQA…FVGS). Ser-80 carries the post-translational modification Phosphoserine; by FAM20C. The Ca(2+) site is built by Asp-92, Asp-94, Asp-96, Glu-103, Asp-128, Asp-130, Asp-132, Lys-134, Glu-139, Asp-179, Asn-181, Asp-183, Thr-185, Glu-190, Asp-216, Asn-218, Asp-220, Glu-227, Asp-257, Asn-259, Asp-261, Lys-263, Glu-268, Asp-293, Asn-295, Asp-297, Lys-299, and Glu-304. The Prevents secretion from ER signature appears at 328–331 (HDEL).

It belongs to the CREC family. Post-translationally, O-glycosylated. O-mannosylated by POMT1 and POMT2 and elongated by POMGNT1.

It localises to the endoplasmic reticulum lumen. In terms of biological role, may regulate calcium-dependent activities in the endoplasmic reticulum lumen or post-ER compartment. This is Reticulocalbin-1 (RCN1) from Homo sapiens (Human).